The following is an 846-amino-acid chain: Aminopeptidase N (846 aa).

Substrate is bound by residues Glu120 and 252–256 (GAMEN). His288 provides a ligand contact to Zn(2+). The active-site Proton acceptor is Glu289. His292 and Glu311 together coordinate Zn(2+).

The protein belongs to the peptidase M1 family. As to quaternary structure, monomer. Requires Zn(2+) as cofactor.

Its subcellular location is the cytoplasm. It carries out the reaction Release of an N-terminal amino acid, Xaa-|-Yaa- from a peptide, amide or arylamide. Xaa is preferably Ala, but may be most amino acids including Pro (slow action). When a terminal hydrophobic residue is followed by a prolyl residue, the two may be released as an intact Xaa-Pro dipeptide.. Its function is as follows. Aminopeptidase with broad substrate specificity to several peptides. It has more affinity for oligopeptides than for dipeptides. It plays an essential role in the metabolism, it may be involved in nitrogen supply or protein turnover. The protein is Aminopeptidase N (pepN) of Lactococcus lactis subsp. cremoris (Streptococcus cremoris).